The chain runs to 258 residues: Acyl-[acyl-carrier-protein]--UDP-N-acetylglucosamine O-acyltransferase (258 aa).

The protein belongs to the transferase hexapeptide repeat family. LpxA subfamily. In terms of assembly, homotrimer.

The protein resides in the cytoplasm. The catalysed reaction is a (3R)-hydroxyacyl-[ACP] + UDP-N-acetyl-alpha-D-glucosamine = a UDP-3-O-[(3R)-3-hydroxyacyl]-N-acetyl-alpha-D-glucosamine + holo-[ACP]. Its pathway is glycolipid biosynthesis; lipid IV(A) biosynthesis; lipid IV(A) from (3R)-3-hydroxytetradecanoyl-[acyl-carrier-protein] and UDP-N-acetyl-alpha-D-glucosamine: step 1/6. Its function is as follows. Involved in the biosynthesis of lipid A, a phosphorylated glycolipid that anchors the lipopolysaccharide to the outer membrane of the cell. This chain is Acyl-[acyl-carrier-protein]--UDP-N-acetylglucosamine O-acyltransferase, found in Thiobacillus denitrificans (strain ATCC 25259 / T1).